We begin with the raw amino-acid sequence, 975 residues long: 5'-3' exoribonuclease 2 homolog (975 aa).

The CCHC-type zinc finger occupies 262 to 279 (RACDLCGQYGHELKECRG). Disordered stretches follow at residues 424-443 (MQMY…GRGQ) and 505-532 (SPAD…EGPK). An interaction with paxt-1 region spans residues 534-787 (DIRLYESGWK…GICVLYEDPE (254 aa)). The segment covering 804-821 (EPEKTLKPDDWNDRRDGR) has biased composition (basic and acidic residues). Positions 804–975 (EPEKTLKPDD…GGYHGNSSWR (172 aa)) are disordered. Composition is skewed to gly residues over residues 850–860 (RGGGGGGGGYR), 886–895 (NYGGRDGGGP), and 908–932 (GYQG…GGGS).

Belongs to the 5'-3' exonuclease family. XRN2/RAT1 subfamily. Interacts with paxt-1 (via N-terminus); the interaction is direct and results in stabilization of xrn-2 in the complex. As to expression, expressed in the pharyngeal myoepithelium and intestine. Also expressed in several anterior neurons including the sensory neurons, as well as the interneuron PVT and the pharyngeal motorneuron M5.

The protein resides in the nucleus. In terms of biological role, possesses 5'-&gt;3' exoribonuclease activity. Plays a role in maintenance of steady-state concentration and turnover of microRNAs (miRNA) by degradation of mature miRNA. Degradation role is enhanced when in complex with paxt-1. Partially redundant to xrn-1 in miRNA guide strand degradation. Implicated in differential regulation of mRNAs such as let-7 by controlling the accumulation of mature miRNA. Positively regulates molting of the pharyngeal cuticle. The sequence is that of 5'-3' exoribonuclease 2 homolog from Caenorhabditis elegans.